Here is a 108-residue protein sequence, read N- to C-terminus: Phosphoribosyl-ATP pyrophosphatase (108 aa).

Belongs to the PRA-PH family.

Its subcellular location is the cytoplasm. The enzyme catalyses 1-(5-phospho-beta-D-ribosyl)-ATP + H2O = 1-(5-phospho-beta-D-ribosyl)-5'-AMP + diphosphate + H(+). Its pathway is amino-acid biosynthesis; L-histidine biosynthesis; L-histidine from 5-phospho-alpha-D-ribose 1-diphosphate: step 2/9. The sequence is that of Phosphoribosyl-ATP pyrophosphatase from Dechloromonas aromatica (strain RCB).